A 503-amino-acid polypeptide reads, in one-letter code: MEFSVKSGSPEKQRSACIVVGVFEPRRLSPIAEQLDKISDGYISALLRRGELEGKPGQTLLLHHVPNVLSERILLIGCGKERELDERQYKQVIQKTINTLNDTGSMEAVCFLTELHVKGRNNYWKVRQAVETAKETLYSFDQLKTNKSEPRRPLRKMVFNVPTRRELTSGERAIQHGLAIAAGIKAAKDLGNMPPNICNAAYLASQARQLADSYSKNVITRVIGEQQMKELGMHSYLAVGHGSQNESLMSVIEYKGNPSEDARPVVLVGKGLTFDSGGISIKPAEGMDEMKYDMCGAAAVYGVMRMVAELQLPINVIGVLAGCENMPGGRAYRPGDVLTTMSGQTVEVLNTDAEGRLVLCDVLTYVERFEPEAVIDVATLTGACVIALGHHITGLMSNHNPLAHELISASEQAGDRAWRLPLGDEFQEQLESNFADIANIGGRPGGAITAGCFLSRFTRKYNWAHLDIAGTAWRSGKAKGATGRPVALLSQFLLNRAGFNGEE.

The Mn(2+) site is built by Lys-270 and Asp-275. Residue Lys-282 is part of the active site. Mn(2+) contacts are provided by Asp-293, Asp-352, and Glu-354. The active site involves Arg-356.

Belongs to the peptidase M17 family. Mn(2+) is required as a cofactor.

Its subcellular location is the cytoplasm. The enzyme catalyses Release of an N-terminal amino acid, Xaa-|-Yaa-, in which Xaa is preferably Leu, but may be other amino acids including Pro although not Arg or Lys, and Yaa may be Pro. Amino acid amides and methyl esters are also readily hydrolyzed, but rates on arylamides are exceedingly low.. The catalysed reaction is Release of an N-terminal amino acid, preferentially leucine, but not glutamic or aspartic acids.. Its function is as follows. Presumably involved in the processing and regular turnover of intracellular proteins. Catalyzes the removal of unsubstituted N-terminal amino acids from various peptides. This Citrobacter koseri (strain ATCC BAA-895 / CDC 4225-83 / SGSC4696) protein is Probable cytosol aminopeptidase.